Here is a 404-residue protein sequence, read N- to C-terminus: Beta-ketoacyl-[acyl-carrier-protein] synthase III, chloroplastic (404 aa).

A chloroplast-targeting transit peptide spans 1 to 43; sequence MANASGFFTHPSIPNLRSRIHVPVRVSGSGFCVSNRFSKRVLC. Active-site residues include Cys-179, His-330, and Asn-360.

Belongs to the thiolase-like superfamily. FabH family.

It localises to the plastid. The protein localises to the chloroplast. The enzyme catalyses malonyl-[ACP] + acetyl-CoA + H(+) = 3-oxobutanoyl-[ACP] + CO2 + CoA. It participates in lipid metabolism; fatty acid biosynthesis. Catalyzes the condensation reaction of fatty acid synthesis by the addition to an acyl acceptor of two carbons from malonyl-ACP. KAS III catalyzes the first condensation reaction which initiates fatty acid synthesis and may therefore play a role in governing the total rate of fatty acid production. Possesses both acetoacetyl-ACP synthase and acetyl transacylase activities. In Arabidopsis thaliana (Mouse-ear cress), this protein is Beta-ketoacyl-[acyl-carrier-protein] synthase III, chloroplastic.